We begin with the raw amino-acid sequence, 1310 residues long: Vacuolating cytotoxin autotransporter (1310 aa).

An N-terminal signal peptide occupies residues 1–30 (MEIQQTHRKINRPIISLALVGVLMGTELGA). The tract at residues 339–364 (PEGGYESKTKDNPQNNPKNDAQKTEI) is disordered. Over residues 350 to 364 (NPQNNPKNDAQKTEI) the composition is skewed to polar residues. An Autotransporter domain is found at 1038 to 1310 (KYEKPTNVWA…ASNLGMRYSF (273 aa)).

The protein resides in the periplasm. Its subcellular location is the secreted. It localises to the cell surface. It is found in the cell outer membrane. Functionally, induces vacuolation of eukaryotic cells. Causes ulceration and gastric lesions. This Helicobacter pylori (Campylobacter pylori) protein is Vacuolating cytotoxin autotransporter (vacA).